We begin with the raw amino-acid sequence, 363 residues long: Probable methyltransferase-like protein 24 (363 aa).

An N-terminal signal peptide occupies residues 1–38 (MGTAKPPGRGCGALPRWLLGAALLLGLRLCMELRHAGS). The disordered stretch occupies residues 37-62 (GSGPPGRRDLRGPPRTHLLPAPGPLR).

This sequence belongs to the methyltransferase superfamily.

The protein resides in the secreted. Probable methyltransferase. This Rattus norvegicus (Rat) protein is Probable methyltransferase-like protein 24 (Mettl24).